The primary structure comprises 473 residues: DNA (cytosine-5)-methyltransferase DRM1A (473 aa).

Residues 20-61 form the UBA 1 domain; the sequence is SAPSALVAYFLGMGFSREMVFRAIKEIGDTDSEQILELLLTY. The span at 84–101 shows a compositional bias: acidic residues; it reads EEEDEEEDVNWDEDDTVD. Residues 84-115 are disordered; sequence EEEDEEEDVNWDEDDTVDNFDRATYSDGSGDE. Residues 120-140 enclose the UBA 2 domain; sequence EMSEKDEKIKSLVSMGFPEDE. In terms of domain architecture, SAM-dependent MTase DRM-type spans 204 to 431; it reads VHRNLPDQAL…DSVKTIMASI (228 aa).

This sequence belongs to the class I-like SAM-binding methyltransferase superfamily. DRM-methyltransferase family.

The protein resides in the nucleus. The enzyme catalyses a 2'-deoxycytidine in DNA + S-adenosyl-L-methionine = a 5-methyl-2'-deoxycytidine in DNA + S-adenosyl-L-homocysteine + H(+). In terms of biological role, involved in de novo DNA methylation. Involved in RNA-directed DNA methylation (RdDM). This chain is DNA (cytosine-5)-methyltransferase DRM1A, found in Oryza sativa subsp. japonica (Rice).